Consider the following 185-residue polypeptide: Ribosome maturation factor RimP (185 aa).

The protein belongs to the RimP family.

It localises to the cytoplasm. Functionally, required for maturation of 30S ribosomal subunits. The sequence is that of Ribosome maturation factor RimP from Magnetococcus marinus (strain ATCC BAA-1437 / JCM 17883 / MC-1).